A 282-amino-acid chain; its full sequence is Bifunctional protein FolD (282 aa).

NADP(+) contacts are provided by residues 164–166, Ile189, and Ile230; that span reads GAS.

This sequence belongs to the tetrahydrofolate dehydrogenase/cyclohydrolase family. As to quaternary structure, homodimer.

It catalyses the reaction (6R)-5,10-methylene-5,6,7,8-tetrahydrofolate + NADP(+) = (6R)-5,10-methenyltetrahydrofolate + NADPH. The catalysed reaction is (6R)-5,10-methenyltetrahydrofolate + H2O = (6R)-10-formyltetrahydrofolate + H(+). It participates in one-carbon metabolism; tetrahydrofolate interconversion. Its function is as follows. Catalyzes the oxidation of 5,10-methylenetetrahydrofolate to 5,10-methenyltetrahydrofolate and then the hydrolysis of 5,10-methenyltetrahydrofolate to 10-formyltetrahydrofolate. The chain is Bifunctional protein FolD from Campylobacter jejuni subsp. doylei (strain ATCC BAA-1458 / RM4099 / 269.97).